The following is a 157-amino-acid chain: UPF0251 protein CLJ_B1488 (157 aa).

This sequence belongs to the UPF0251 family.

This Clostridium botulinum (strain 657 / Type Ba4) protein is UPF0251 protein CLJ_B1488.